The sequence spans 288 residues: Acetyl-coenzyme A carboxylase carboxyl transferase subunit beta (288 aa).

A CoA carboxyltransferase N-terminal domain is found at 30 to 288 (IMTKCPKCKK…KLHQEVKKDA (259 aa)). Positions 34, 37, 53, and 56 each coordinate Zn(2+). The C4-type zinc-finger motif lies at 34-56 (CPKCKKIMYTKELNENLNVCFNC).

The protein belongs to the AccD/PCCB family. As to quaternary structure, acetyl-CoA carboxylase is a heterohexamer composed of biotin carboxyl carrier protein (AccB), biotin carboxylase (AccC) and two subunits each of ACCase subunit alpha (AccA) and ACCase subunit beta (AccD). It depends on Zn(2+) as a cofactor.

The protein localises to the cytoplasm. The catalysed reaction is N(6)-carboxybiotinyl-L-lysyl-[protein] + acetyl-CoA = N(6)-biotinyl-L-lysyl-[protein] + malonyl-CoA. The protein operates within lipid metabolism; malonyl-CoA biosynthesis; malonyl-CoA from acetyl-CoA: step 1/1. Component of the acetyl coenzyme A carboxylase (ACC) complex. Biotin carboxylase (BC) catalyzes the carboxylation of biotin on its carrier protein (BCCP) and then the CO(2) group is transferred by the transcarboxylase to acetyl-CoA to form malonyl-CoA. The sequence is that of Acetyl-coenzyme A carboxylase carboxyl transferase subunit beta from Staphylococcus haemolyticus (strain JCSC1435).